The sequence spans 209 residues: PRA1 family protein E (209 aa).

The tract at residues 1 to 20 (MNQKPPPYGYGGAGGGGVGP) is disordered. Gly residues predominate over residues 9–19 (GYGGAGGGGVG). 3 consecutive transmembrane segments (helical) span residues 90 to 110 (IVFL…VVFI), 132 to 152 (VDDK…LVYT), and 155 to 175 (GENV…HGAF).

Belongs to the PRA1 family. As to quaternary structure, interacts with PRA1B1, PRA1B2, PRA1B3, PRA1B4, PRA1B5 and PRA1B6. As to expression, expressed in hypocotyls, roots, lateral roots, columella cells, leaves and shoot apex.

The protein localises to the endosome membrane. In terms of biological role, may be involved in both secretory and endocytic intracellular trafficking in the endosomal/prevacuolar compartments. This is PRA1 family protein E (PRA1E) from Arabidopsis thaliana (Mouse-ear cress).